A 504-amino-acid polypeptide reads, in one-letter code: Arabinose import ATP-binding protein AraG (504 aa).

ABC transporter domains lie at 8 to 243 and 256 to 499; these read LSFR…MVGR and YGEE…MPKV. 40–47 serves as a coordination point for ATP; that stretch reads GENGAGKS.

Belongs to the ABC transporter superfamily. Arabinose importer (TC 3.A.1.2.2) family. As to quaternary structure, the complex is composed of two ATP-binding proteins (AraG), two transmembrane proteins (AraH) and a solute-binding protein (AraF).

The protein localises to the cell inner membrane. It catalyses the reaction L-arabinose(out) + ATP + H2O = L-arabinose(in) + ADP + phosphate + H(+). Part of the ABC transporter complex AraFGH involved in arabinose import. Responsible for energy coupling to the transport system. This Shigella sonnei (strain Ss046) protein is Arabinose import ATP-binding protein AraG.